A 584-amino-acid chain; its full sequence is Extracellular serine/threonine protein kinase FAM20C (584 aa).

Residues 1–10 (MKMMLVRRFR) are Cytoplasmic-facing. Residues 1–92 (MKMMLVRRFR…PNKHTLRILQ (92 aa)) constitute a propeptide that is removed on maturation. The helical; Signal-anchor for type II membrane protein transmembrane segment at 11-31 (VLILMVFLVACALHIALDLLP) threads the bilayer. Residues 32 to 584 (RLERRGARPS…DTEHRAASAR (553 aa)) are Lumenal-facing. Disordered stretches follow at residues 62-81 (QVRG…GDAG) and 94-159 (FSSD…GDAS). Composition is skewed to low complexity over residues 71-81 (PAASSAAGDAG) and 95-112 (SSDP…KLPP). N-linked (GlcNAc...) asparagine glycosylation occurs at asparagine 101. The residue at position 106 (serine 106) is a Phosphoserine. The span at 116-149 (PAERALRGRDPGALRPHDPAHRPLLRDPGPRRSE) shows a compositional bias: basic and acidic residues. ATP is bound by residues glutamine 269, lysine 285, and glutamate 306. Glutamate 306 provides a ligand contact to Mn(2+). A glycan (N-linked (GlcNAc...) asparagine) is linked at asparagine 335. A kinase domain region spans residues 354 to 565 (FISPANNICF…AVRDCVERNG (212 aa)). 2 disulfides stabilise this stretch: cysteine 362–cysteine 378 and cysteine 367–cysteine 371. 389–392 (AAFL) is a binding site for ATP. Cystine bridges form between cysteine 426/cysteine 500 and cysteine 501/cysteine 560. Aspartate 458 is an active-site residue. Glutamate 463 contacts ATP. N-linked (GlcNAc...) asparagine glycosylation is present at asparagine 470. Residue aspartate 478 participates in ATP binding. Aspartate 478 lines the Mn(2+) pocket.

This sequence belongs to the FAM20 family. In terms of assembly, homodimer; disulfide-linked. Interacts with FAM20A; probably forming a heterotetramer of 2 subunits of FAM20A and 2 subunits of FAM20C. Interacts with protease MBTPS1/S1P; the interaction results in FAM20C cleavage and secretion. Interacts with COPII components SEC23A and SEC24A; transport of FAM20C from the endoplasmic reticulum to the Golgi is likely to be mediated by COPII vesicles. It depends on Mn(2+) as a cofactor. Post-translationally, N-glycosylation is required for folding. Autophosphorylated. In terms of processing, propeptide cleavage by MBTPS1/S1P promotes FAM20C secretion and maximal kinase activity which is essential for efficient osteoblast differentiation and biomineralization. Widely expressed.

The protein localises to the golgi apparatus membrane. It localises to the secreted. The protein resides in the endoplasmic reticulum. The enzyme catalyses L-seryl-[protein] + ATP = O-phospho-L-seryl-[protein] + ADP + H(+). The catalysed reaction is L-threonyl-[protein] + ATP = O-phospho-L-threonyl-[protein] + ADP + H(+). Its activity is regulated as follows. Serine/threonine protein kinase activity is increased upon interaction with FAM20A. In terms of biological role, golgi serine/threonine protein kinase that phosphorylates secretory pathway proteins within Ser-x-Glu/pSer motifs and plays a key role in biomineralization of bones and teeth. Constitutes the main protein kinase for extracellular proteins, generating the majority of the extracellular phosphoproteome. Mainly phosphorylates proteins within the Ser-x-Glu/pSer motif, but also displays a broader substrate specificity. Phosphorylates ERO1A, enhancing its activity which is required to maintain endoplasmic reticulum redox homeostasis and for oxidative protein folding. During endoplasmic reticulum stress, phosphorylates P4HB/PDIA1 which induces a functional switch, causing P4HB to change from an oxidoreductase to a molecular chaperone. This is critical to maintain ER proteostasis and reduce cell death under ER stress. Phosphorylation of P4HB also promotes its interaction with ERN1, leading to reduced activity of ERN1, a key sensor for the endoplasmic reticulum unfolded protein response. Required for osteoblast differentiation and mineralization. Phosphorylates casein as well as a number of proteins involved in biomineralization such as AMELX, AMTN, ENAM and SPP1/OPN. In addition to its role in biomineralization, also plays a role in lipid homeostasis, wound healing and cell migration and adhesion. The sequence is that of Extracellular serine/threonine protein kinase FAM20C from Homo sapiens (Human).